The following is a 104-amino-acid chain: Thioredoxin (104 aa).

One can recognise a Thioredoxin domain in the interval 2–104; that stretch reads AIVKVTDSDF…NLAEVLDKHL (103 aa). Residues cysteine 29 and cysteine 32 are joined by a disulfide bond.

The protein belongs to the thioredoxin family.

In terms of biological role, component of the thioredoxin-thioredoxin reductase system. Participates in various redox reactions through the reversible oxidation of its active center dithiol to a disulfide and catalyzes dithiol-disulfide exchange reactions. The sequence is that of Thioredoxin (trxA) from Staphylococcus epidermidis (strain ATCC 35984 / DSM 28319 / BCRC 17069 / CCUG 31568 / BM 3577 / RP62A).